A 98-amino-acid polypeptide reads, in one-letter code: Secreted LysM effector Mgx1LysM (98 aa).

Positions 1–18 are cleaved as a signal peptide; that stretch reads MKVTTIIAALLSVAVVDA. Disulfide bonds link Cys-31-Cys-89 and Cys-62-Cys-97. Residues 37-85 enclose the LysM domain; that stretch reads IPYVVKKGDTLTHIAHDIYKRKVGICDLAYTNHIGKNPNLIYAGQTLLI. Chitin-binding residues include Gly-44, Thr-48, Asn-75, and Ile-77.

It belongs to the secreted LysM effector family. In terms of assembly, forms homodimers in a chitin-independent manner through interactions at the N-termini of Mgx1LysM monomers. Homodimers are further polymerized in a chitin-dependent manner.

The protein localises to the secreted. Its subcellular location is the cell wall. Its function is as follows. Secreted effector that enables the plant pathogenic fungus to manipulate host defenses for successful infection. Binds chitin and suppresses the chitin-induced reactive oxygen species (ROS) burst. Chitin-induced polymerization of homodimers forms a contiguous Mg1LysM highly oligomeric super-complexe that is anchored to the chitin in the fungal cell wall to prevent hydrolysis by host chitinases. The protein is Secreted LysM effector Mgx1LysM of Zymoseptoria tritici (strain ST99CH_3D7).